Here is a 322-residue protein sequence, read N- to C-terminus: Transcriptional activator protein Pur-alpha (322 aa).

Residues 1–55 (MADRDSGSEQGGAALGSGGSLGHPGSGSGSGGGGGGGGGGGGSGGGGGGAPGGLQ) form a disordered region. At A2 the chain carries N-acetylalanine. Positions 9–52 (EQGGAALGSGGSLGHPGSGSGSGGGGGGGGGGGGSGGGGGGAPG) are enriched in gly residues. A PUR repeat I repeat occupies 60 to 125 (ELASKRVDIQ…DFIEHYAQLG (66 aa)). Residues 142-213 (ALKSEFLVRE…KLIDDYGVEE (72 aa)) form a PUR repeat II repeat. At S182 the chain carries Phosphoserine. Residues 215–281 (PAELPEGTSL…CKYSEEMKKI (67 aa)) form a PUR repeat III repeat. Residues 295-314 (LHQQQQQQQEETAAATLLLQ) are compositionally biased toward low complexity. The disordered stretch occupies residues 295–322 (LHQQQQQQQEETAAATLLLQGEEEGEED).

It belongs to the PUR DNA-binding protein family. As to quaternary structure, homodimer, heterodimer with PURB and heterotrimer with PURB and YBX1/Y-box protein 1. Interacts with FMR1; this interaction occurs in association with polyribosome.

Its subcellular location is the nucleus. Its function is as follows. This is a probable transcription activator that specifically binds the purine-rich single strand of the PUR element located upstream of the MYC gene. May play a role in the initiation of DNA replication and in recombination. This Homo sapiens (Human) protein is Transcriptional activator protein Pur-alpha (PURA).